Reading from the N-terminus, the 289-residue chain is Pyridoxal kinase PdxY (289 aa).

Substrate is bound by residues Ser9 and 44–45; that span reads TQ. Residues Asp112, Ala144, Glu149, and Lys182 each contribute to the ATP site. Position 225 (Asp225) interacts with substrate.

It belongs to the pyridoxine kinase family. PdxY subfamily. Homodimer. The cofactor is Mg(2+).

It catalyses the reaction pyridoxal + ATP = pyridoxal 5'-phosphate + ADP + H(+). It functions in the pathway cofactor metabolism; pyridoxal 5'-phosphate salvage; pyridoxal 5'-phosphate from pyridoxal: step 1/1. In terms of biological role, pyridoxal kinase involved in the salvage pathway of pyridoxal 5'-phosphate (PLP). Catalyzes the phosphorylation of pyridoxal to PLP. This Aliivibrio fischeri (strain ATCC 700601 / ES114) (Vibrio fischeri) protein is Pyridoxal kinase PdxY.